The primary structure comprises 541 residues: Calcium-dependent protein kinase 25 (541 aa).

A compositionally biased stretch (gly residues) spans 1-11 (MGQCCTGGGKA). The interval 1-74 (MGQCCTGGGK…AGPIGEVLER (74 aa)) is disordered. Residue glycine 2 is the site of N-myristoyl glycine attachment. Over residues 38–67 (AKQQPCSPAAKAAATEAAAAASSSKKPAGP) the composition is skewed to low complexity. The Protein kinase domain occupies 83–341 (YSIGKELGRG…AFQVLNHPWI (259 aa)). ATP is bound by residues 89 to 97 (LGRGQFGVT) and lysine 112. Residue aspartate 207 is the Proton acceptor of the active site. The segment at 347–377 (APDVPLDNVVLNRLKQFRAMNQFKKAALRII) is autoinhibitory domain. EF-hand domains lie at 384-419 (EEIK…QGTK), 420-455 (FSDN…MNKM), 456-491 (DREE…QGLY), and 493-526 (ANEI…GSGC). Aspartate 397, aspartate 399, serine 401, threonine 403, glutamate 408, aspartate 433, aspartate 435, asparagine 437, glutamate 444, aspartate 469, aspartate 471, serine 473, tyrosine 475, glutamate 480, aspartate 504, asparagine 506, aspartate 508, arginine 510, and glutamate 515 together coordinate Ca(2+).

This sequence belongs to the protein kinase superfamily. Ser/Thr protein kinase family. CDPK subfamily. As to expression, specifically expressed in heading panicles, spikelets and mature pollen grains. Not expressed in vegetative tissues.

Its subcellular location is the membrane. The catalysed reaction is L-seryl-[protein] + ATP = O-phospho-L-seryl-[protein] + ADP + H(+). It catalyses the reaction L-threonyl-[protein] + ATP = O-phospho-L-threonyl-[protein] + ADP + H(+). Activated by calcium. Autophosphorylation may play an important role in the regulation of the kinase activity. May play a role in signal transduction pathways that involve calcium as a second messenger. The polypeptide is Calcium-dependent protein kinase 25 (Oryza sativa subsp. japonica (Rice)).